Consider the following 1694-residue polypeptide: Clathrin heavy chain (1694 aa).

The tract at residues 1–478 (MTNLPIRFQE…HDRKLALSIY (478 aa)) is globular terminal domain. WD40-like repeat stretches follow at residues 23-67 (SIGF…KQMK), 68-107 (TDAAIMNPKEPILALKIGQVLQLISIEQKMQLKSCQMQEP), 108-149 (LEFW…PDLQ), 150-195 (NTEI…QSIE), 196-256 (GHAA…EIGA), 257-300 (SDFP…ISNE), and 301-329 (NIFVTAFEESTNGIIAVNRKGQVLSVSID). The tract at residues 448-464 (EKWLTEDKLECSEQLGD) is binding site for the uncoating ATPase, involved in lattice disassembly. The tract at residues 479–522 (YRANASDKVITLFAETGEFDKIIAYCKKFNYKPDFMFLLQRMAN) is flexible linker. The heavy chain arm stretch occupies residues 523–1694 (ANPMGAADFA…QQNYNQYGGF (1172 aa)). CHCR repeat units follow at residues 537–681 (KEEG…QNLQ), 687–829 (AVSY…QEDY), 834–973 (IMSV…SLID), 980–1125 (LPES…VKEC), 1129–1270 (FIKA…FRLA), 1275–1421 (INII…LLIN), and 1424–1567 (LSVL…NSAF). Residues 1214–1523 (AAKVLYTNIS…YLYKKNNRWA (310 aa)) are involved in binding clathrin light chain. The segment at 1551 to 1694 (GEELLQYFVD…QQNYNQYGGF (144 aa)) is trimerization. Residues 1610 to 1640 (KVDQLVDDFKARQKKTEEEKEQQNIESSQYQ) are a coiled coil.

It belongs to the clathrin heavy chain family. As to quaternary structure, clathrin coats are formed from molecules containing 3 heavy chains and 3 light chains.

The protein resides in the cytoplasmic vesicle membrane. The protein localises to the membrane. It is found in the coated pit. Its function is as follows. Clathrin is the major protein of the polyhedral coat of coated pits and vesicles. The protein is Clathrin heavy chain (chcA) of Dictyostelium discoideum (Social amoeba).